A 481-amino-acid chain; its full sequence is Hyaluronidase-4 (481 aa).

Residues 1 to 11 (MQLLPEGQLRL) are Cytoplasmic-facing. Residues 12 to 32 (CVFQPVHLTSGLLILFILKSI) form a helical membrane-spanning segment. Residues 33–455 (SSLKPARLPV…CREMTEASGP (423 aa)) are Extracellular-facing. 5 cysteine pairs are disulfide-bonded: cysteine 59/cysteine 351, cysteine 223/cysteine 237, cysteine 376/cysteine 387, cysteine 381/cysteine 435, and cysteine 437/cysteine 446. 2 N-linked (GlcNAc...) asparagine glycosylation sites follow: asparagine 64 and asparagine 115. Glutamate 147 functions as the Proton donor in the catalytic mechanism. N-linked (GlcNAc...) asparagine glycosylation is found at asparagine 232 and asparagine 343. Residues 456–476 (SGLSLSSSSVITLCLLVLAGY) form a helical membrane-spanning segment. The Cytoplasmic portion of the chain corresponds to 477 to 481 (QSIQL).

Belongs to the glycosyl hydrolase 56 family.

The protein resides in the membrane. The catalysed reaction is Random hydrolysis of (1-&gt;4)-linkages between N-acetyl-beta-D-glucosamine and D-glucuronate residues in hyaluronate.. In terms of biological role, endo-hyaluronidase that degrades hyaluronan to smaller oligosaccharide fragments. Also has chondroitin sulfate hydrolase activity, The best substrate being the galactosaminidic linkage in the sequence of a trisulfated tetrasaccharide. This is Hyaluronidase-4 (Hyal4) from Mus musculus (Mouse).